We begin with the raw amino-acid sequence, 1230 residues long: Basic-leucine zipper transcription factor A (1230 aa).

4 disordered regions span residues 65 to 108, 180 to 233, 270 to 310, and 422 to 578; these read LYLS…NIIN, LNGN…QQHQ, QQLK…PSTQ, and HQQN…RKKD. Low complexity-rich tracts occupy residues 69-108, 192-233, 270-287, 295-310, and 422-447; these read NSSNNTNNNNNNNNNNNNNNNNNNNNNNNNNNNNNNNIIN, NNFS…QQHQ, QQLKQQQPQQHPIQSPQP, PSLQQHQTYSYTPSTQ, and HQQNIQQHQNQNQQQLQLPQPQQQQH. Polar residues-rich tracts occupy residues 448–458 and 466–475; these read KSTPPTQNTPP and TPTLTTNGKG. Residues 476–503 are compositionally biased toward low complexity; it reads SKSTPPTTTTTTTTTTSSSSSSSSSSSS. Residues 523-537 show a composition bias toward basic residues; it reads PHHHHHHHNNHHHHH. A compositionally biased stretch (acidic residues) spans 541–554; the sequence is FSDENDEEFIDENE. The bZIP domain maps to 555 to 618; that stretch reads DKSKNKSRSS…LGDVMRPDFD (64 aa). The interval 556-586 is basic motif; sequence KSKNKSRSSQNIASRNYRQRKKDHISEVEFK. Residues 562-571 are compositionally biased toward polar residues; the sequence is RSSQNIASRN. The segment at 590-604 is leucine-zipper; that stretch reads LSLENERLKQENHLL. A coiled-coil region spans residues 728 to 753; sequence LKIDMELRTERDQLDREIKELFLKKI. Disordered regions lie at residues 772 to 869 and 1025 to 1230; these read TFNS…EHNK and NYTN…TPNI. 2 stretches are compositionally biased toward low complexity: residues 774–803 and 810–831; these read NSESDYPSSPSSASNSSNSPPTSSPTIITP and NNQNNQNNNQMINSNSNNSNNN. Residues 832-845 show a composition bias toward basic residues; it reads SHHHHHHHHSHLHG. The segment covering 1025-1042 has biased composition (polar residues); the sequence is NYTNSPLITSSPSQLTPN. 2 stretches are compositionally biased toward low complexity: residues 1052-1146 and 1153-1193; these read NNNN…NNGN and QALH…SPSS.

Belongs to the bZIP family. Binds DNA as a dimer. Heterodimerizes with dimB; in vitro. Also able to form homodimer; in vitro.

It localises to the nucleus. In terms of biological role, transcriptional regulator involved in DIF-1 signaling. DIF-1 (Differentiation Inducing Factor-1) is a signal molecule involved in the differentiation of pstO (prestalk-O) cells. Functions both as an activator of prestalk gene expression and a repressor of prespore gene expression. The protein is Basic-leucine zipper transcription factor A (dimA) of Dictyostelium discoideum (Social amoeba).